The chain runs to 322 residues: MLEVLIIGAGPTGLYAAFLAGLRNLKAAVIESSAEPGGQLTAVYKDKYIYDIPGFPKITAKDYIDGQVLQYERFKSDLPIYYNEEAIDIKKHDDHFIVTTTTKTIETKFVLIAHGGGGFVPQKLKIDEHYDNILYFIKDLNQFKDKKIVVLGGGDSALDWAIDLSEYTKDVTLVHRRDEFRALQSSVDHFREKGTILTPYIVDTVEGNDKLVHTLVLKHAKTHERLNLDADYIVVNYGFVLTKSRLDEWGIEGEKGLIKVDYTMKTSLDGIYAAGNGIDYPGKVKLISTGQGEAATAIQSITTLLYPEKTRKFEHSTALIKE.

FAD contacts are provided by Thr12, Glu31, Gln39, Tyr44, Ala86, Phe119, and Thr317.

This sequence belongs to the ferredoxin--NADP reductase type 2 family. Homodimer. FAD serves as cofactor.

It catalyses the reaction 2 reduced [2Fe-2S]-[ferredoxin] + NADP(+) + H(+) = 2 oxidized [2Fe-2S]-[ferredoxin] + NADPH. This chain is Ferredoxin--NADP reductase, found in Acholeplasma laidlawii (strain PG-8A).